The following is a 689-amino-acid chain: Elongation factor G (689 aa).

Residues 8 to 282 (LNTRNIGIMA…AVVDYLPSPI (275 aa)) enclose the tr-type G domain. GTP is bound by residues 17-24 (AHIDAGKT), 81-85 (DTPGH), and 135-138 (NKMD).

Belongs to the TRAFAC class translation factor GTPase superfamily. Classic translation factor GTPase family. EF-G/EF-2 subfamily.

Its subcellular location is the cytoplasm. Catalyzes the GTP-dependent ribosomal translocation step during translation elongation. During this step, the ribosome changes from the pre-translocational (PRE) to the post-translocational (POST) state as the newly formed A-site-bound peptidyl-tRNA and P-site-bound deacylated tRNA move to the P and E sites, respectively. Catalyzes the coordinated movement of the two tRNA molecules, the mRNA and conformational changes in the ribosome. The sequence is that of Elongation factor G from Mycoplasma capricolum subsp. capricolum (strain California kid / ATCC 27343 / NCTC 10154).